The following is a 398-amino-acid chain: MRPGGALLALLASLLLLLLLRLLWCPADAPGRARILVEESREATHGTPAALRTLRSPATAVPRATNSTYLNEKSLQLTEKCKNLQYGIESFSNKTKGYSENDYLQIITDIQSCPWKRQAEEYANFRAKLASCCDAVQNFVVSQNNTPVGTNMSYEVESKKEIPIKKNIFHMFPVSQPFVDYPYNQCAVVGNGGILNKSLCGTEIDKSDFVFRCNLPPTTGDVSKDVGSKTNLVTINPSIITLKYGNLKEKKALFLEDIATYGDAFFLLPAFSFRANTGTSFKVYYTLEESKARQKVLFFHPKYLKDLALFWRTKGVTAYRLSTGLMITSVAVELCKNVKLYGFWPFSKTVEDIPVSHHYYDNKLPKHGFHQMPKEYSQILQLHMKGILKLQFSKCEVA.

The Cytoplasmic segment spans residues 1–3 (MRP). A helical; Signal-anchor for type II membrane protein membrane pass occupies residues 4 to 24 (GGALLALLASLLLLLLLRLLW). Over 25–398 (CPADAPGRAR…KLQFSKCEVA (374 aa)) the chain is Lumenal. N-linked (GlcNAc...) asparagine glycosylation is found at asparagine 66, asparagine 93, asparagine 151, and asparagine 196. 2 disulfides stabilise this stretch: cysteine 186/cysteine 335 and cysteine 200/cysteine 395. Substrate is bound by residues asparagine 214, 236-238 (NPS), and 322-324 (STG). Histidine 370 serves as the catalytic Proton donor/acceptor.

Belongs to the glycosyltransferase 29 family.

Its subcellular location is the golgi apparatus membrane. The catalysed reaction is a ganglioside GM3 + CMP-N-acetyl-beta-neuraminate = a ganglioside GD3 + CMP + H(+). The enzyme catalyses a ganglioside GM3 (d18:1(4E)) + CMP-N-acetyl-beta-neuraminate = a ganglioside GD3 (d18:1(4E)) + CMP + H(+). It carries out the reaction a ganglioside GD1a (d18:1(4E)) + CMP-N-acetyl-beta-neuraminate = a ganglioside GT1a (d18:1(4E)) + CMP + H(+). It catalyses the reaction a ganglioside GD1a + CMP-N-acetyl-beta-neuraminate = a ganglioside GT1a + CMP + H(+). The catalysed reaction is a ganglioside GM1b (d18:1(4E)) + CMP-N-acetyl-beta-neuraminate = a ganglioside GD1c (d18:1(4E)) + CMP + H(+). The enzyme catalyses a ganglioside GM1b + CMP-N-acetyl-beta-neuraminate = a ganglioside GD1c + CMP + H(+). It carries out the reaction a ganglioside GM4 (d18:1(4E)) + CMP-N-acetyl-beta-neuraminate = an N-acetyl-alpha-neuraminosyl-(2-&gt;8)-N-acetyl-alpha-neuraminosyl-(2-&gt;3)-beta-D-galactosyl-(1&lt;-&gt;1')-N-acylsphing-4-enine + CMP + H(+). It catalyses the reaction N-acetyl-alpha-neuraminosyl-(2-&gt;3)-beta-D-galactosyl-(1&lt;-&gt;1')-ceramide + CMP-N-acetyl-beta-neuraminate = N-acetyl-alpha-neuraminosyl-(2-&gt;8)-N-acetyl-alpha-neuraminosyl-(2-&gt;3)-beta-D-galactosyl-(1&lt;-&gt;1')-ceramide + CMP + H(+). The catalysed reaction is a ganglioside GT1b (d18:1(4E)) + CMP-N-acetyl-beta-neuraminate = a ganglioside GQ1b (d18:1(4E)) + CMP + H(+). The enzyme catalyses a ganglioside GT1b + CMP-N-acetyl-beta-neuraminate = a ganglioside GQ1b + CMP + H(+). It functions in the pathway protein modification; protein glycosylation. In terms of biological role, alpha-2,8-sialyltransferase that prefers O-glycans to N-glycans or glycolipids as acceptor substrates. The minimal acceptor substrate is the NeuAc-alpha-2,3(6)-Gal sequence at the non-reducing end of their carbohydrate groups. In Homo sapiens (Human), this protein is Alpha-2,8-sialyltransferase 8F.